Consider the following 271-residue polypeptide: MLTKKPEINTILQTTPDPHSLPAAMATEDLHVYYGDNHAIKGVDLTFPENKVTALIGPSGCGKSTYLRALNRMNDEIDGCRMEGQILYDGININRKEVDLYNVRKEIGMVFQKPNPFTKSIYENVAFGLKRHGMKNKKEIMERVEKSLRRAALWDEVKDDLGKSALSLSGGQQQRLCIARAVAMQPKVLLLDEPASALDPISTSKIEDLINELKNKYTIIIVTHNMQQAARVSDYTSFFYLGEVVEFSGTSELFTNPQEKQTEDYISGNFG.

The disordered stretch occupies residues 1–20 (MLTKKPEINTILQTTPDPHS). The ABC transporter domain maps to 25 to 266 (MATEDLHVYY…PQEKQTEDYI (242 aa)). Position 57–64 (57–64 (GPSGCGKS)) interacts with ATP.

It belongs to the ABC transporter superfamily. Phosphate importer (TC 3.A.1.7) family. In terms of assembly, the complex is composed of two ATP-binding proteins (PstB), two transmembrane proteins (PstC and PstA) and a solute-binding protein (PstS).

It localises to the cell membrane. It carries out the reaction phosphate(out) + ATP + H2O = ADP + 2 phosphate(in) + H(+). In terms of biological role, part of the ABC transporter complex PstSACB involved in phosphate import. Responsible for energy coupling to the transport system. The protein is Phosphate import ATP-binding protein PstB 2 of Listeria innocua serovar 6a (strain ATCC BAA-680 / CLIP 11262).